We begin with the raw amino-acid sequence, 324 residues long: tRNA N6-adenosine threonylcarbamoyltransferase (324 aa).

3 residues coordinate Fe cation: His107, His111, and Tyr128. Residues 128–132 (YVSGG), Asp160, Gly173, Glu177, and Asn256 contribute to the substrate site. Asp284 contributes to the Fe cation binding site.

This sequence belongs to the KAE1 / TsaD family. In terms of assembly, monomer. Component of the KEOPS complex that consists of Kae1, Bud32, Cgi121 and Pcc1; the whole complex dimerizes. It depends on Fe(2+) as a cofactor.

It is found in the cytoplasm. The enzyme catalyses L-threonylcarbamoyladenylate + adenosine(37) in tRNA = N(6)-L-threonylcarbamoyladenosine(37) in tRNA + AMP + H(+). Functionally, required for the formation of a threonylcarbamoyl group on adenosine at position 37 (t(6)A37) in tRNAs that read codons beginning with adenine. Is a component of the KEOPS complex that is probably involved in the transfer of the threonylcarbamoyl moiety of threonylcarbamoyl-AMP (TC-AMP) to the N6 group of A37. Kae1 likely plays a direct catalytic role in this reaction, but requires other protein(s) of the complex to fulfill this activity. The polypeptide is tRNA N6-adenosine threonylcarbamoyltransferase (Methanothrix thermoacetophila (strain DSM 6194 / JCM 14653 / NBRC 101360 / PT) (Methanosaeta thermophila)).